A 206-amino-acid polypeptide reads, in one-letter code: uncharacterized protein (206 aa).

Disordered stretches follow at residues 64-123 (NTES…DPSL) and 155-206 (VTTP…SSGG). The segment covering 66 to 79 (ESTQKTATTQQQGL) has biased composition (polar residues). Positions 97–107 (AENNAQANQSE) are enriched in low complexity. Over residues 108–118 (NRAESTTKAES) the composition is skewed to basic and acidic residues. A compositionally biased stretch (low complexity) spans 155-167 (VTTPTGQVVQPQT). The span at 182–198 (GSMNSKPVSRGGFSSPN) shows a compositional bias: polar residues.

This is an uncharacterized protein from Haemophilus influenzae (strain ATCC 51907 / DSM 11121 / KW20 / Rd).